We begin with the raw amino-acid sequence, 264 residues long: Ribosomal RNA small subunit methyltransferase J (264 aa).

S-adenosyl-L-methionine is bound by residues 111–112 (RD), 127–128 (ER), and aspartate 180.

The protein belongs to the methyltransferase superfamily. RsmJ family.

It localises to the cytoplasm. It carries out the reaction guanosine(1516) in 16S rRNA + S-adenosyl-L-methionine = N(2)-methylguanosine(1516) in 16S rRNA + S-adenosyl-L-homocysteine + H(+). Functionally, specifically methylates the guanosine in position 1516 of 16S rRNA. This is Ribosomal RNA small subunit methyltransferase J from Alkalilimnicola ehrlichii (strain ATCC BAA-1101 / DSM 17681 / MLHE-1).